The following is a 274-amino-acid chain: NADPH-dependent 7-cyano-7-deazaguanine reductase (274 aa).

The disordered stretch occupies residues 1-33 (MPKKDALDHLSLGQHTDYPNEYDPKQLQPVPRS). A substrate-binding site is contributed by 84 to 86 (IES). 86–87 (SK) contributes to the NADPH binding site. Cys183 serves as the catalytic Thioimide intermediate. Catalysis depends on Asp190, which acts as the Proton donor. Residue 222–223 (HE) coordinates substrate. 250–251 (RG) provides a ligand contact to NADPH.

It belongs to the GTP cyclohydrolase I family. QueF type 2 subfamily. Homodimer.

It is found in the cytoplasm. It carries out the reaction 7-aminomethyl-7-carbaguanine + 2 NADP(+) = 7-cyano-7-deazaguanine + 2 NADPH + 3 H(+). The protein operates within tRNA modification; tRNA-queuosine biosynthesis. Functionally, catalyzes the NADPH-dependent reduction of 7-cyano-7-deazaguanine (preQ0) to 7-aminomethyl-7-deazaguanine (preQ1). This Idiomarina loihiensis (strain ATCC BAA-735 / DSM 15497 / L2-TR) protein is NADPH-dependent 7-cyano-7-deazaguanine reductase.